Here is a 145-residue protein sequence, read N- to C-terminus: Partner of bursicon (145 aa).

The N-terminal stretch at 1-28 (MKENFSIMFIHSIFLILIIFIYSNETIA) is a signal peptide. Cystine bridges form between Cys-36-Cys-94, Cys-60-Cys-109, Cys-69-Cys-135, Cys-73-Cys-137, and Cys-91-Cys-140. Positions 36–131 (CETLQSEVHI…NGVMEIKIRE (96 aa)) constitute a CTCK domain.

In terms of assembly, heterodimer of burs and pburs.

It localises to the secreted. Its function is as follows. Final heterodimeric neurohormone released at the end of the molting cycle, involved in the sclerotization (tanning) of the insect cuticle, melanization and wing spreading. The protein is Partner of bursicon (pburs) of Apis mellifera (Honeybee).